A 343-amino-acid chain; its full sequence is 5-amino-6-(D-ribitylamino)uracil--L-tyrosine 4-hydroxyphenyl transferase (343 aa).

The region spanning 39-268 is the Radical SAM core domain; sequence VTYVVNRNIN…AIARILLYPE (230 aa). Positions 53, 57, and 60 each coordinate [4Fe-4S] cluster.

The protein belongs to the radical SAM superfamily. CofH family. In terms of assembly, consists of two subunits, CofG and CofH. Requires [4Fe-4S] cluster as cofactor.

It carries out the reaction 5-amino-6-(D-ribitylamino)uracil + L-tyrosine + S-adenosyl-L-methionine = 5-amino-5-(4-hydroxybenzyl)-6-(D-ribitylimino)-5,6-dihydrouracil + 2-iminoacetate + 5'-deoxyadenosine + L-methionine + H(+). Its pathway is cofactor biosynthesis; coenzyme F0 biosynthesis. Functionally, catalyzes the radical-mediated synthesis of 5-amino-5-(4-hydroxybenzyl)-6-(D-ribitylimino)-5,6-dihydrouracil from 5-amino-6-(D-ribitylamino)uracil and L-tyrosine. The chain is 5-amino-6-(D-ribitylamino)uracil--L-tyrosine 4-hydroxyphenyl transferase from Archaeoglobus fulgidus (strain ATCC 49558 / DSM 4304 / JCM 9628 / NBRC 100126 / VC-16).